Consider the following 119-residue polypeptide: Protein Wnt-4 (119 aa).

Ser-1 is lipidated: O-palmitoleoyl serine; by PORCN. 2 disulfide bridges follow: Cys-69-Cys-100 and Cys-85-Cys-95. An N-linked (GlcNAc...) asparagine glycan is attached at Asn-86.

It belongs to the Wnt family. Post-translationally, palmitoleoylation is required for efficient binding to frizzled receptors. Depalmitoleoylation leads to Wnt signaling pathway inhibition.

Its subcellular location is the secreted. It localises to the extracellular space. The protein localises to the extracellular matrix. Functionally, ligand for members of the frizzled family of seven transmembrane receptors. Plays an important role in embryonic development. The protein is Protein Wnt-4 (WNT-4) of Plestiodon skiltonianus (Western skink).